We begin with the raw amino-acid sequence, 419 residues long: Peptide chain release factor subunit 1 (419 aa).

The protein belongs to the eukaryotic release factor 1 family. As to quaternary structure, heterodimer of two subunits, one of which binds GTP.

It localises to the cytoplasm. Functionally, directs the termination of nascent peptide synthesis (translation) in response to the termination codons UAA, UAG and UGA. This is Peptide chain release factor subunit 1 from Methanococcus maripaludis (strain C5 / ATCC BAA-1333).